We begin with the raw amino-acid sequence, 36 residues long: Trypsin inhibitor 2 (36 aa).

Intrachain disulfides connect cysteine 3–cysteine 20, cysteine 10–cysteine 24, and cysteine 19–cysteine 35.

In terms of biological role, trypsin inhibitor. This is Trypsin inhibitor 2 from Spinacia oleracea (Spinach).